A 389-amino-acid polypeptide reads, in one-letter code: Cuticlin-3 (389 aa).

A signal peptide spans 1–19; sequence MARYSLGLGLCLLVASVSA. The Extracellular portion of the chain corresponds to 20-354; that stretch reads IPVDNNVEGE…ELCISSFHIS (335 aa). Positions 33–278 constitute a ZP domain; the sequence is ECGPTSITVN…PTCSEPQGFG (246 aa). N-linked (GlcNAc...) asparagine glycosylation occurs at Asn284. Residues 355–375 form a helical membrane-spanning segment; that stretch reads VVTVFLGLTVFVAIFITYMIV. Over 376–389 the chain is Cytoplasmic; sequence SRMMVPSDKMQSAC.

It is found in the cell membrane. Its function is as follows. Plays a role in alae formation in L1 larvae. The protein is Cuticlin-3 of Caenorhabditis elegans.